Here is a 416-residue protein sequence, read N- to C-terminus: Enterobactin exporter EntS (416 aa).

The Cytoplasmic portion of the chain corresponds to 1-21 (MNKQSWLLNLSLLKTHPAFRA). A helical membrane pass occupies residues 22–42 (VFLARFISIVSLGLLGVAVPV). The Periplasmic segment spans residues 43-55 (QIQMMTHSTWQVG). Residues 56 to 76 (LSVTLTGGAMFVGLMVGGVLA) form a helical membrane-spanning segment. Topologically, residues 77–83 (DRYERKK) are cytoplasmic. The chain crosses the membrane as a helical span at residues 84–104 (VILLARGTCGIGFIGLCLNAL). Topologically, residues 105–109 (LPEPS) are periplasmic. Residues 110 to 130 (LLAIYLLGLWDGFFASLGVTA) traverse the membrane as a helical segment. Residues 131–156 (LLAATPALVGRENLMQAGAITMLTVR) are Cytoplasmic-facing. Residues 157–177 (LGSVISPMIGGLLLATGGVAW) form a helical membrane-spanning segment. A topological domain (periplasmic) is located at residue Asn-178. A helical membrane pass occupies residues 179 to 199 (YGLAAAGTFITLLPLLSLPAL). The Cytoplasmic segment spans residues 200–218 (PPPPQPREHPLKSLLAGFR). Residues 219–239 (FLLASPLVGGIALLGGLLTMA) traverse the membrane as a helical segment. The Periplasmic portion of the chain corresponds to 240–256 (SAVRVLYPALADNWQMS). A helical membrane pass occupies residues 257–277 (AAQIGFLYAAIPLGAAIGALT). Residues 278–287 (SGKLAHSARP) lie on the Cytoplasmic side of the membrane. The helical transmembrane segment at 288 to 307 (GLLMLLSTLGSFLAIGLFGL) threads the bilayer. Residues 308 to 313 (MPMWIL) lie on the Periplasmic side of the membrane. Residues 314–336 (GVICLALFGWLSAVSSLLQYTML) form a helical membrane-spanning segment. Residues 337 to 356 (QTQTPEAMLGRINGLWTAQN) lie on the Cytoplasmic side of the membrane. The helical transmembrane segment at 357-377 (VTGDAIGAALLGGLGAMMTPV) threads the bilayer. Position 378 (Ala-378) is a topological domain, periplasmic. A helical membrane pass occupies residues 379 to 399 (SASASGFGLLIIGVLLLLVLV). Residues 400–416 (ELRRFRQTPPQVTASDS) lie on the Cytoplasmic side of the membrane.

This sequence belongs to the major facilitator superfamily. EntS (TC 2.A.1.38) family.

The protein localises to the cell inner membrane. In terms of biological role, component of an export pathway for enterobactin. In Escherichia coli O81 (strain ED1a), this protein is Enterobactin exporter EntS.